The primary structure comprises 328 residues: Fructosamine deglycase FrlB (328 aa).

2 SIS domains span residues 15–153 and 181–311; these read FLQD…VLEN and NAKQ…ELAE.

In terms of assembly, homooctamer.

Its function is as follows. Catalyzes the conversion of a range of fructosamine 6-phosphates to glucose 6-phosphate and a free amino acid. The polypeptide is Fructosamine deglycase FrlB (frlB) (Bacillus subtilis (strain 168)).